A 988-amino-acid polypeptide reads, in one-letter code: MGELPKDDWQMNRWKWDGQRFEAIELQGESLQLSNKKGLDLNLPCGFNDVEGTPVDLTRPSKKVRSGSPGSGGGGGGNYPKCQVDNCKEDLSIAKDYHRRHKVCEVHSKATKALVGKQMQRFCQQCSRFHLLSEFDEGKRSCRRRLDGHNRRRRKTQPDAITSQVVALENRDNTSNNTNMDVMALLTALVCAQGRNEATTNGSPGVPQREQLLQILNKIKALPLPMNLTSKLNNIGILARKNPEQPSPMNPQNSMNGASSPSTMDLLAALSASLGSSAPEAIAFLSQGGFGNKESNDRTKLTSSDHSATTSLEKKTLEFPSFGGGERTSSTNHSPSQYSDSRGQDTRSSLSLQLFTSSPEEESRPKVASSTKYYSSASSNPVEDRSPSSSPVMQELFPLHTSPETRRYNNYKDTSTSPRTSCLPLELFGASNRGATANPNYNVLRHQSGYASSGSDYSPPSLNSNAQERTGKISFKLFEKDPSQLPNTLRTEIFRWLSSFPSDMESFIRPGCVILSVYVAMSASAWEQLEENLLQRVRSLVQDSEFWSNSRFLVNAGRQLASHKHGRIRLSKSWRTLNLPELITVSPLAVVAGEETALIVRGRNLTNDGMRLRCAHMGNYASMEVTGREHRLTKVDELNVSSFQVQSASSVSLGRCFIELENGLRGDNFPLIIANATICKELNRLEEEFHPKDVIEEQIQNLDRPRSREEVLCFLNELGWLFQRKWTSDIHGEPDFSLPRFKFLLVCSVERDYCSLIRTVLDMMVERNLGKDGLLNKESLDMLADIQLLNRAIKRRNTKMAETLIHYSVNPSTRNFIFLPSIAGPGDITPLHLAASTSSSDDMIDALTNDPQEIGLSCWNTLVDATGQTPFSYAAMRDNHSYNTLVARKLADKRNGQISLNIENGIDQIGLSKRLSSELKRSCNTCASVALKYQRKVSGSRRLFPTPIIHSMLAVATVCVCVCVFMHAFPMVRQGSHFSWGGLDYGSI.

The segment at 52-79 is disordered; it reads GTPVDLTRPSKKVRSGSPGSGGGGGGNY. Residues 69-78 are compositionally biased toward gly residues; it reads PGSGGGGGGN. Residues 79–156 form an SBP-type zinc finger; it reads YPKCQVDNCK…DGHNRRRRKT (78 aa). Residues Cys-82, Cys-87, Cys-104, His-107, Cys-123, Cys-126, His-130, and Cys-142 each contribute to the Zn(2+) site. The Bipartite nuclear localization signal motif lies at 139-155; the sequence is KRSCRRRLDGHNRRRRK. Disordered regions lie at residues 240–262 and 289–416; these read RKNP…SSPS and GFGN…DTST. Composition is skewed to polar residues over residues 250-262, 301-311, and 327-358; these read NPQN…SSPS, LTSSDHSATTS, and RTSS…FTSS. Over residues 368-379 the composition is skewed to low complexity; that stretch reads ASSTKYYSSASS.

Zn(2+) is required as a cofactor.

The protein resides in the nucleus. In terms of biological role, trans-acting factor that binds specifically to the consensus nucleotide sequence 5'-TNCGTACAA-3'. This chain is Squamosa promoter-binding-like protein 16 (SPL16), found in Arabidopsis thaliana (Mouse-ear cress).